Reading from the N-terminus, the 375-residue chain is MSTAGKVIKCKAAVLWEVKKPFSIEDVEVAPPKAYEVRIKMVAVGICRTDDHVVSGNLVSPLPAILGHEAAGIVESVGEGVTTVKPGDKVIPLFTPQCGKCRVCKSPEGNYCVKNDLSNPRGTLQDGTRRFTCRGKPIHHFVGTSTFSQYTVVDENAVAKIDAASPLEKVCLIGCGFSTGYGSAVNVAKVTPGSVCAVFGLGGVGLSAVMGCKAAGAARIIAVDINKDKFAKAKELGATECINPQDYKKPIQEVLKEMTDGGVDFSFEVIGRLDTMMASLLCCHEACGTSVIVGVPPDSQNLSINPMLLLTGRTWKGAVYGGFKSREGIPKLVADFMAKKFSLDALITHVLPFEKINEGFDLLRSGKSIRTVLTF.

At Ser2 the chain carries N-acetylserine. Ser23 bears the Phosphoserine mark. Tyr35 is modified (phosphotyrosine). Residues Cys47, His68, Cys98, Cys101, Cys104, Cys112, and Cys175 each coordinate Zn(2+). Residues 200 to 205, Asp224, Lys229, 293 to 295, and Arg370 each bind NAD(+); these read GLGGVG and VGV.

Belongs to the zinc-containing alcohol dehydrogenase family. In terms of assembly, homodimer or heterodimer of closely related subunits. Zn(2+) serves as cofactor. Expressed in liver.

The protein resides in the cytoplasm. The enzyme catalyses all-trans-retinol + NAD(+) = all-trans-retinal + NADH + H(+). It carries out the reaction all-trans-4-hydroxyretinol + NAD(+) = all-trans-4-hydroxyretinal + NADH + H(+). The catalysed reaction is all-trans-4-oxoretinol + NAD(+) = all-trans-4-oxoretinal + NADH + H(+). Catalyzes the NAD-dependent oxidation of all-trans-retinol and its derivatives such as all-trans-4-hydroxyretinol and may participate in retinoid metabolism. In vitro can also catalyze the NADH-dependent reduction of all-trans-retinal and its derivatives such as all-trans-4-oxoretinal. Catalyzes in the oxidative direction with higher efficiency. Has the same affinity for all-trans-4-hydroxyretinol and all-trans-4-oxoretinal. This Papio hamadryas (Hamadryas baboon) protein is All-trans-retinol dehydrogenase [NAD(+)] ADH1B.